Consider the following 353-residue polypeptide: Beta-agarase B (353 aa).

The first 17 residues, M1–G17, serve as a signal peptide directing secretion. C18 is lipidated: N-palmitoyl cysteine. C18 is lipidated: S-diacylglycerol cysteine. Positions L30–V58 are disordered. Acidic residues predominate over residues V32–V58. Positions V58–K353 constitute a GH16 domain. Substrate-binding positions include Y105 to N107 and D181. Catalysis depends on E184, which acts as the Nucleophile. E189 acts as the Proton donor in catalysis. Residues H215, R219, D224, Q226, and E308 each contribute to the substrate site.

The protein belongs to the glycosyl hydrolase 16 family. In terms of assembly, homodimer.

The protein localises to the cell outer membrane. The enzyme catalyses Hydrolysis of (1-&gt;4)-beta-D-galactosidic linkages in agarose, giving the tetramer as the predominant product.. Functionally, cleaves the beta-1,4-linkages between beta-D-galactose and alpha-L-3,6-anhydro-galactose residues in agarose. Cleaves agarose in a random manner with retention of the anomeric-bond configuration, producing beta-anomers that give rise progressively to alpha-anomers when mutarotation takes place. Also tolerant to hybrid substrates containing C6-sulfate groups at the -4, +1, and +3 positions. The sequence is that of Beta-agarase B (agaB) from Zobellia galactanivorans (strain DSM 12802 / CCUG 47099 / CIP 106680 / NCIMB 13871 / Dsij).